Here is a 374-residue protein sequence, read N- to C-terminus: Peptide chain release factor 2 (374 aa).

Gln-252 carries the N5-methylglutamine modification.

Belongs to the prokaryotic/mitochondrial release factor family. Post-translationally, methylated by PrmC. Methylation increases the termination efficiency of RF2.

The protein localises to the cytoplasm. In terms of biological role, peptide chain release factor 2 directs the termination of translation in response to the peptide chain termination codons UGA and UAA. This chain is Peptide chain release factor 2, found in Stenotrophomonas maltophilia (strain R551-3).